The chain runs to 192 residues: Small ribosomal subunit protein eS7 (192 aa).

Belongs to the eukaryotic ribosomal protein eS7 family.

The sequence is that of Small ribosomal subunit protein eS7 (RpS7) from Culex quinquefasciatus (Southern house mosquito).